A 138-amino-acid polypeptide reads, in one-letter code: Large ribosomal subunit protein bL19 (138 aa).

The protein belongs to the bacterial ribosomal protein bL19 family.

Its function is as follows. This protein is located at the 30S-50S ribosomal subunit interface and may play a role in the structure and function of the aminoacyl-tRNA binding site. The polypeptide is Large ribosomal subunit protein bL19 (Rickettsia rickettsii (strain Iowa)).